A 275-amino-acid polypeptide reads, in one-letter code: Coagulation factor IX (275 aa).

Tyrosine 23 is modified (sulfotyrosine). A glycan (N-linked (GlcNAc...) asparagine) is linked at asparagine 25. At threonine 27 the chain carries Phosphothreonine. Residue asparagine 35 is glycosylated (N-linked (GlcNAc...) asparagine). Threonine 47 is a glycosylation site (O-linked (GalNAc...) threonine). Positions 49-275 (IVGGENAKPG…YTRVSWYVNW (227 aa)) constitute a Peptidase S1 domain. The cysteines at positions 74 and 90 are disulfide-linked. The active-site Charge relay system is histidine 89. The N-linked (GlcNAc...) asparagine glycan is linked to asparagine 96. The Ca(2+) site is built by glutamate 103, asparagine 105, glutamate 108, glutamate 110, and glutamate 113. Residue asparagine 128 is glycosylated (N-linked (GlcNAc...) asparagine). Aspartate 137 acts as the Charge relay system in catalysis. Intrachain disulfides connect cysteine 204-cysteine 218 and cysteine 229-cysteine 257. Catalysis depends on serine 233, which acts as the Charge relay system.

It belongs to the peptidase S1 family. As to quaternary structure, heterodimer of a light chain and a heavy chain; disulfide-linked. Interacts (inactive and activated) with F11 (activated) in calcium-dependent manner. Interacts with SERPINC1. Post-translationally, activated by factor XIa, which excises the activation peptide. The propeptide can also be removed by snake venom protease. Activated by coagulation factor VIIa-tissue factor (F7-F3) complex in calcium-dependent manner.

The protein resides in the secreted. The catalysed reaction is Selective cleavage of Arg-|-Ile bond in factor X to form factor Xa.. Its function is as follows. Factor IX is a vitamin K-dependent plasma protein that participates in the intrinsic pathway of blood coagulation by converting factor X to its active form in the presence of Ca(2+) ions, phospholipids, and factor VIIIa. The protein is Coagulation factor IX (F9) of Oryctolagus cuniculus (Rabbit).